The primary structure comprises 250 residues: Urease accessory protein UreF (250 aa).

The segment at 1–21 (MDEADPGEAEAAQAEAAQDGA) is disordered. Residues 9–21 (AEAAQAEAAQDGA) are compositionally biased toward low complexity.

The protein belongs to the UreF family. In terms of assembly, ureD, UreF and UreG form a complex that acts as a GTP-hydrolysis-dependent molecular chaperone, activating the urease apoprotein by helping to assemble the nickel containing metallocenter of UreC. The UreE protein probably delivers the nickel.

The protein resides in the cytoplasm. In terms of biological role, required for maturation of urease via the functional incorporation of the urease nickel metallocenter. The sequence is that of Urease accessory protein UreF from Methylobacterium sp. (strain 4-46).